The sequence spans 245 residues: Ubiquinone/menaquinone biosynthesis C-methyltransferase UbiE (245 aa).

S-adenosyl-L-methionine-binding positions include T71, D92, and 118–119; that span reads DA.

This sequence belongs to the class I-like SAM-binding methyltransferase superfamily. MenG/UbiE family.

The catalysed reaction is a 2-demethylmenaquinol + S-adenosyl-L-methionine = a menaquinol + S-adenosyl-L-homocysteine + H(+). The enzyme catalyses a 2-methoxy-6-(all-trans-polyprenyl)benzene-1,4-diol + S-adenosyl-L-methionine = a 5-methoxy-2-methyl-3-(all-trans-polyprenyl)benzene-1,4-diol + S-adenosyl-L-homocysteine + H(+). The protein operates within quinol/quinone metabolism; menaquinone biosynthesis; menaquinol from 1,4-dihydroxy-2-naphthoate: step 2/2. Its pathway is cofactor biosynthesis; ubiquinone biosynthesis. Its function is as follows. Methyltransferase required for the conversion of demethylmenaquinol (DMKH2) to menaquinol (MKH2) and the conversion of 2-polyprenyl-6-methoxy-1,4-benzoquinol (DDMQH2) to 2-polyprenyl-3-methyl-6-methoxy-1,4-benzoquinol (DMQH2). This chain is Ubiquinone/menaquinone biosynthesis C-methyltransferase UbiE, found in Neisseria meningitidis serogroup C / serotype 2a (strain ATCC 700532 / DSM 15464 / FAM18).